The sequence spans 332 residues: Methionine synthase (332 aa).

Zn(2+)-binding residues include His-211, Cys-213, and Cys-296.

The protein belongs to the archaeal MetE family. Zn(2+) is required as a cofactor.

Its pathway is amino-acid biosynthesis; L-methionine biosynthesis via de novo pathway. In terms of biological role, catalyzes the transfer of a methyl group to L-homocysteine resulting in methionine formation. The physiological methyl donor is unknown. The sequence is that of Methionine synthase from Saccharolobus islandicus (strain L.S.2.15 / Lassen #1) (Sulfolobus islandicus).